Consider the following 393-residue polypeptide: Beta-1,3-galactosyltransferase 7 (393 aa).

Residues 9–29 (VISLKWVPFLCISFFALGAIF) form a helical; Signal-anchor for type II membrane protein membrane-spanning segment. The tract at residues 89 to 112 (SLDKSVSTLSSTRSSQEMVDGSET) is disordered. A compositionally biased stretch (low complexity) spans 93 to 103 (SVSTLSSTRSS).

This sequence belongs to the glycosyltransferase 31 family. Requires Mn(2+) as cofactor. As to expression, expressed in leaves, stems, flowers and siliques.

The protein localises to the golgi apparatus membrane. The protein operates within protein modification; protein glycosylation. In terms of biological role, beta-1,3-galactosyltransferase that transfers galactose from UDP-galactose to substrates with a terminal glycosyl residue. The polypeptide is Beta-1,3-galactosyltransferase 7 (B3GALT7) (Arabidopsis thaliana (Mouse-ear cress)).